Reading from the N-terminus, the 520-residue chain is Cyclic GMP-AMP synthase-like receptor (520 aa).

ATP-binding positions include Ser-68 and 80 to 82; that span reads EFD. Positions 80, 82, and 198 each coordinate Mg(2+). Asp-198 lines the GTP pocket. Position 264 (Lys-264) interacts with ATP. Mn(2+) is bound by residues Leu-288 and Asp-294.

It belongs to the mab-21 family. Mg(2+) is required as a cofactor. The cofactor is Mn(2+).

The enzyme catalyses GTP + ATP = 2',3'-cGAMP + 2 diphosphate. It carries out the reaction GTP + ATP = pppGp(2'-5')A + diphosphate. The catalysed reaction is pppGp(2'-5')A = 2',3'-cGAMP + diphosphate. In terms of biological role, nucleotidyltransferase that catalyzes the formation of cyclic GMP-AMP (2',3'-cGAMP) from ATP and GTP and plays a key role in innate immunity. Acts as a key sensor of double-stranded RNA (dsRNA), the presence of dsRNA in the cytoplasm being a danger signal that triggers the immune responses. Directly binds dsRNA, activating the nucleotidyltransferase activity, leading to synthesis of 2',3'-cGAMP, a second messenger that binds to and activates Sting, thereby triggering the immune response via activation of the NF-kappa-B transcription factor. In Microplitis demolitor (Parasitoid wasp), this protein is Cyclic GMP-AMP synthase-like receptor.